An 84-amino-acid polypeptide reads, in one-letter code: Cell division topological specificity factor (84 aa).

The protein belongs to the MinE family.

Its function is as follows. Prevents the cell division inhibition by proteins MinC and MinD at internal division sites while permitting inhibition at polar sites. This ensures cell division at the proper site by restricting the formation of a division septum at the midpoint of the long axis of the cell. This chain is Cell division topological specificity factor, found in Burkholderia ambifaria (strain MC40-6).